A 450-amino-acid polypeptide reads, in one-letter code: tRNA-2-methylthio-N(6)-dimethylallyladenosine synthase (450 aa).

Positions 3–118 constitute an MTTase N-terminal domain; it reads KKVFIKTFGC…LPELLQQRER (116 aa). Cysteine 12, cysteine 49, cysteine 81, cysteine 155, cysteine 159, and cysteine 162 together coordinate [4Fe-4S] cluster. A Radical SAM core domain is found at 141–376; that stretch reads SVQGASAFVS…VIDTHIRSIS (236 aa). Residues 377–440 enclose the TRAM domain; the sequence is ASRVGTVQRI…AYTLRGQYCA (64 aa).

It belongs to the methylthiotransferase family. MiaB subfamily. As to quaternary structure, monomer. [4Fe-4S] cluster is required as a cofactor.

The protein resides in the cytoplasm. It carries out the reaction N(6)-dimethylallyladenosine(37) in tRNA + (sulfur carrier)-SH + AH2 + 2 S-adenosyl-L-methionine = 2-methylsulfanyl-N(6)-dimethylallyladenosine(37) in tRNA + (sulfur carrier)-H + 5'-deoxyadenosine + L-methionine + A + S-adenosyl-L-homocysteine + 2 H(+). Catalyzes the methylthiolation of N6-(dimethylallyl)adenosine (i(6)A), leading to the formation of 2-methylthio-N6-(dimethylallyl)adenosine (ms(2)i(6)A) at position 37 in tRNAs that read codons beginning with uridine. This is tRNA-2-methylthio-N(6)-dimethylallyladenosine synthase from Verminephrobacter eiseniae (strain EF01-2).